Consider the following 349-residue polypeptide: Pinopsin (349 aa).

The span at 1 to 16 (MDPTNSPQEPPHTSTP) shows a compositional bias: polar residues. A disordered region spans residues 1–22 (MDPTNSPQEPPHTSTPGPFDGP). Residues 1 to 32 (MDPTNSPQEPPHTSTPGPFDGPQWPHQAPRGM) are Extracellular-facing. A helical transmembrane segment spans residues 33 to 57 (YLSVAVLMGIVVISASVVNGLVIVV). The Cytoplasmic segment spans residues 58 to 69 (SIRYKKLRSPLN). A helical membrane pass occupies residues 70-94 (YILVNLAMADLLVTLCGSSVSFSNN). Over 95–109 (INGFFVFGKRLCELE) the chain is Extracellular. Cysteines 106 and 183 form a disulfide. The chain crosses the membrane as a helical span at residues 110 to 129 (GFMVSLTGIVGLWSLAILAL). The Cytoplasmic portion of the chain corresponds to 130-148 (ERYVVVCRPLGDFRFQHRH). The helical transmembrane segment at 149-172 (AVTGCAFTWVWSLLWTTPPLLGWS) threads the bilayer. The Extracellular portion of the chain corresponds to 173-196 (SYVPEGLRTSCGPNWYTGGSNNNS). Residue N194 is glycosylated (N-linked (GlcNAc...) asparagine). Residues 197-224 (YILTLFVTCFVMPLSLILFSYANLLMTL) form a helical membrane-spanning segment. The Cytoplasmic portion of the chain corresponds to 225–246 (RAAAAQQQESDTTQQAERQVTR). Residues 247–270 (MVVAMVMAFLICWLPYTTFALVVA) traverse the membrane as a helical segment. Over 271–278 (TNKDIAIQ) the chain is Extracellular. A helical membrane pass occupies residues 279-303 (PALASLPSYFSKTATVYNPIIYVFM). K290 carries the N6-(retinylidene)lysine modification. Over 304–349 (NKQFQSCLLKMLCCGHHPRGTGRTAPAAPASPTDGLRNKVTPSHPV) the chain is Cytoplasmic. Residues C316 and C317 are each lipidated (S-palmitoyl cysteine). The segment at 325-349 (GRTAPAAPASPTDGLRNKVTPSHPV) is disordered.

It belongs to the G-protein coupled receptor 1 family. Opsin subfamily. In terms of processing, phosphorylated on some or all of the serine and threonine residues present in the C-terminal region. As to expression, pineal gland.

It is found in the membrane. Its function is as follows. Produces a slow and prolonged phototransduction response consistent with the non-visual function of pineal photoreception. This is Pinopsin from Columba livia (Rock dove).